An 803-amino-acid polypeptide reads, in one-letter code: Translation initiation factor IF-2 (803 aa).

Disordered stretches follow at residues 95–125 and 138–178; these read PVVE…EKAE and EVKE…EREE. Over residues 111–121 the composition is skewed to polar residues; the sequence is VPLTSDTTNLN. The span at 138–155 shows a compositional bias: basic and acidic residues; that stretch reads EVKEEAKKTPSEKKETPK. Residues 156-167 are compositionally biased toward basic residues; that stretch reads KGPRKETRRSRK. Positions 168–178 are enriched in basic and acidic residues; sequence PDKEDKWEREE. Residues 302–471 enclose the tr-type G domain; it reads PRAPVVTIMG…LLQAEVLELK (170 aa). Residues 311 to 318 form a G1 region; it reads GHVDHGKT. A GTP-binding site is contributed by 311-318; that stretch reads GHVDHGKT. The tract at residues 336–340 is G2; that stretch reads GITQH. A G3 region spans residues 357 to 360; sequence DTPG. GTP contacts are provided by residues 357-361 and 411-414; these read DTPGH and NKID. A G4 region spans residues 411–414; it reads NKID. The G5 stretch occupies residues 447-449; it reads SAK.

Belongs to the TRAFAC class translation factor GTPase superfamily. Classic translation factor GTPase family. IF-2 subfamily.

The protein localises to the cytoplasm. One of the essential components for the initiation of protein synthesis. Protects formylmethionyl-tRNA from spontaneous hydrolysis and promotes its binding to the 30S ribosomal subunits. Also involved in the hydrolysis of GTP during the formation of the 70S ribosomal complex. This Coxiella burnetii (strain RSA 331 / Henzerling II) protein is Translation initiation factor IF-2.